Here is a 75-residue protein sequence, read N- to C-terminus: Translation initiation factor IF-1 (75 aa).

The region spanning 1-72 (MSKQDLIEME…TKGRITYRLK (72 aa)) is the S1-like domain.

Belongs to the IF-1 family. As to quaternary structure, component of the 30S ribosomal translation pre-initiation complex which assembles on the 30S ribosome in the order IF-2 and IF-3, IF-1 and N-formylmethionyl-tRNA(fMet); mRNA recruitment can occur at any time during PIC assembly.

The protein localises to the cytoplasm. In terms of biological role, one of the essential components for the initiation of protein synthesis. Stabilizes the binding of IF-2 and IF-3 on the 30S subunit to which N-formylmethionyl-tRNA(fMet) subsequently binds. Helps modulate mRNA selection, yielding the 30S pre-initiation complex (PIC). Upon addition of the 50S ribosomal subunit IF-1, IF-2 and IF-3 are released leaving the mature 70S translation initiation complex. This chain is Translation initiation factor IF-1, found in Synechocystis sp. (strain ATCC 27184 / PCC 6803 / Kazusa).